The chain runs to 202 residues: Josephin-1 (202 aa).

The tract at residues 1–22 (MSCVPWKGDKAKAESSDLPQAA) is disordered. Residue Ser15 is modified to Phosphoserine. Residues 23-202 (PPQIYHEKQR…EAHQSWRADV (180 aa)) enclose the Josephin domain. The Nucleophile role is filled by Cys36. Residue His139 is the Proton acceptor of the active site.

As to quaternary structure, interacts with beta-actin/ACTB. Post-translationally, monoubiquitinated. Ubiquitination activates deubiquitination activity in vitro. Widely expressed (at protein level).

The protein resides in the cell membrane. Its subcellular location is the cytoplasm. It catalyses the reaction Thiol-dependent hydrolysis of ester, thioester, amide, peptide and isopeptide bonds formed by the C-terminal Gly of ubiquitin (a 76-residue protein attached to proteins as an intracellular targeting signal).. Its function is as follows. Deubiquitinates monoubiquitinated probes (in vitro). When ubiquitinated, cleaves 'Lys-63'-linked and 'Lys-48'-linked poly-ubiquitin chains (in vitro), hence may act as a deubiquitinating enzyme. May increase macropinocytosis and suppress clathrin- and caveolae-mediated endocytosis. May enhance membrane dynamics and cell motility independently of its catalytic activity. The polypeptide is Josephin-1 (Josd1) (Mus musculus (Mouse)).